A 219-amino-acid chain; its full sequence is MDQLSMKKMAAQAALQYVKPDSIIGVGSGSTVNCFIEVLGTIKETIKGAVAASKASEELLLRQGIEVFSANDVSGLDIYVDGADEINPQKMMIKGGGAALTREKIVAALAKKFICIVDSSKQVDVLGSTFALPIEVIPMARSQVARKLVALGGSPEYRENVVTDNGNVILDVYNFKIMNPIEMEKELNNVAGVVTNGIFALRSADIVIVGTPEGTKIIE.

Residues 28 to 31 (SGST), 81 to 84 (DGAD), and 94 to 97 (KGGG) each bind substrate. Glu103 serves as the catalytic Proton acceptor. Position 121 (Lys121) interacts with substrate.

This sequence belongs to the ribose 5-phosphate isomerase family. Homodimer.

The enzyme catalyses aldehydo-D-ribose 5-phosphate = D-ribulose 5-phosphate. Its pathway is carbohydrate degradation; pentose phosphate pathway; D-ribose 5-phosphate from D-ribulose 5-phosphate (non-oxidative stage): step 1/1. Functionally, catalyzes the reversible conversion of ribose-5-phosphate to ribulose 5-phosphate. The protein is Ribose-5-phosphate isomerase A of Histophilus somni (strain 129Pt) (Haemophilus somnus).